The sequence spans 554 residues: Asparagine synthetase B [glutamine-hydrolyzing] (554 aa).

The active-site For GATase activity is C2. A Glutamine amidotransferase type-2 domain is found at 2-186 (CSIFGVFDIK…AGSYLWSQDG (185 aa)). L-glutamine-binding positions include 50–54 (RLSIV), 75–77 (NGE), and D99. ATP is bound by residues L233, V273, and 347–348 (SG).

This sequence belongs to the asparagine synthetase family. As to quaternary structure, homodimer.

The enzyme catalyses L-aspartate + L-glutamine + ATP + H2O = L-asparagine + L-glutamate + AMP + diphosphate + H(+). It participates in amino-acid biosynthesis; L-asparagine biosynthesis; L-asparagine from L-aspartate (L-Gln route): step 1/1. Glutamine-dependent asparagine synthesis activity can be inhibited by aspartic acid analogs (such as a sulfinate derivative and (2S,3R)-2-amino-3-methylsuccinate) in vitro; the inhibition is competitive with respect to aspartate. Its function is as follows. Catalyzes the ATP-dependent conversion of aspartate into asparagine, using glutamine as a source of nitrogen. Can also use ammonia as the nitrogen source in vitro, albeit with lower efficiency. As nucleotide substrates, ATP and dATP are utilized at a similar rate in both the glutamine- and ammonia-dependent reactions, whereas GTP utilization is only 15% that of ATP, and CTP, UTP, ITP and XTP are very poor or not substrates. Also exhibits glutaminase activity. The sequence is that of Asparagine synthetase B [glutamine-hydrolyzing] (asnB) from Escherichia coli (strain K12).